The chain runs to 535 residues: Alkaline phosphatase, placental type (535 aa).

A signal peptide spans 1 to 22 (MLGPCMLLLLLLLGLRLQLSLG). Asp-64 contacts Mg(2+). Zn(2+) is bound by residues Asp-64 and Ser-114. Ser-114 acts as the Phosphoserine intermediate in catalysis. Residues Cys-143 and Cys-205 are joined by a disulfide bond. N-linked (GlcNAc...) asparagine glycosylation is present at Asn-144. Residue Ser-177 participates in Mg(2+) binding. Residue Glu-238 participates in Ca(2+) binding. A glycan (N-linked (GlcNAc...) asparagine) is linked at Asn-271. 3 residues coordinate Ca(2+): Phe-291, Glu-292, and Asp-307. Mg(2+) is bound at residue Glu-333. 4 residues coordinate Zn(2+): Asp-338, His-342, Asp-379, and His-380. The interval 425–449 (DGARPDVTESESGSPEYRQQSAVPL) is disordered. The segment covering 434–446 (SESGSPEYRQQSA) has biased composition (polar residues). His-454 contacts Zn(2+). An intrachain disulfide couples Cys-489 to Cys-496. Residue Asp-506 is the site of GPI-anchor amidated aspartate attachment. Residues 507–535 (AAHPGRSVVPALLPLLAGTLLLLETATAP) constitute a propeptide, removed in mature form. A helical membrane pass occupies residues 513 to 529 (SVVPALLPLLAGTLLLL).

The protein belongs to the alkaline phosphatase family. In terms of assembly, homodimer. Mg(2+) is required as a cofactor. Requires Zn(2+) as cofactor. The cofactor is Ca(2+). In terms of tissue distribution, detected in placenta (at protein level).

It is found in the cell membrane. The enzyme catalyses a phosphate monoester + H2O = an alcohol + phosphate. Functionally, alkaline phosphatase that can hydrolyze various phosphate compounds. The polypeptide is Alkaline phosphatase, placental type (Homo sapiens (Human)).